A 268-amino-acid polypeptide reads, in one-letter code: ClpXP adapter protein SpxH (268 aa).

The protein belongs to the SpxH family. In terms of assembly, interacts with Spx.

It localises to the cytoplasm. Functionally, adapter protein required for efficient degradation of Spx by ClpXP under non-stress conditions. Interaction with Spx stabilizes Spx and exposes the C-terminus of Spx for recognition and proteolysis by ClpXP. The protein is ClpXP adapter protein SpxH of Staphylococcus aureus (strain Mu3 / ATCC 700698).